Reading from the N-terminus, the 430-residue chain is UDP-N-acetylglucosamine 1-carboxyvinyltransferase 1 (430 aa).

Lysine 22–asparagine 23 serves as a coordination point for phosphoenolpyruvate. Arginine 93 is a binding site for UDP-N-acetyl-alpha-D-glucosamine. Cysteine 117 serves as the catalytic Proton donor. At cysteine 117 the chain carries 2-(S-cysteinyl)pyruvic acid O-phosphothioketal. Residues arginine 122–leucine 126, aspartate 305, and valine 327 contribute to the UDP-N-acetyl-alpha-D-glucosamine site.

This sequence belongs to the EPSP synthase family. MurA subfamily.

Its subcellular location is the cytoplasm. The enzyme catalyses phosphoenolpyruvate + UDP-N-acetyl-alpha-D-glucosamine = UDP-N-acetyl-3-O-(1-carboxyvinyl)-alpha-D-glucosamine + phosphate. Its pathway is cell wall biogenesis; peptidoglycan biosynthesis. In terms of biological role, cell wall formation. Adds enolpyruvyl to UDP-N-acetylglucosamine. This chain is UDP-N-acetylglucosamine 1-carboxyvinyltransferase 1, found in Listeria innocua serovar 6a (strain ATCC BAA-680 / CLIP 11262).